The following is a 328-amino-acid chain: Diaminopimelate epimerase (328 aa).

2 residues coordinate substrate: Asn-14 and Asn-73. The active-site Proton donor is Cys-82. Residues 83–84 (GN), Asn-170, Asn-206, and 224–225 (ER) each bind substrate. Cys-233 acts as the Proton acceptor in catalysis. 234–235 (GT) contributes to the substrate binding site.

It belongs to the diaminopimelate epimerase family. In terms of assembly, homodimer.

The protein resides in the cytoplasm. It carries out the reaction (2S,6S)-2,6-diaminopimelate = meso-2,6-diaminopimelate. The protein operates within amino-acid biosynthesis; L-lysine biosynthesis via DAP pathway; DL-2,6-diaminopimelate from LL-2,6-diaminopimelate: step 1/1. Its function is as follows. Catalyzes the stereoinversion of LL-2,6-diaminopimelate (L,L-DAP) to meso-diaminopimelate (meso-DAP), a precursor of L-lysine and an essential component of the bacterial peptidoglycan. The chain is Diaminopimelate epimerase from Listeria welshimeri serovar 6b (strain ATCC 35897 / DSM 20650 / CCUG 15529 / CIP 8149 / NCTC 11857 / SLCC 5334 / V8).